The following is a 65-amino-acid chain: Conotoxin mr5.1b (65 aa).

Residues 1–19 form the signal peptide; the sequence is MRCVPVFVILLLLIASAPS. Residues 20–48 constitute a propeptide that is removed on maturation; the sequence is VDARLKTKDDMPLPSSHANIKRTLQMLRN. 4-carboxyglutamate is present on glutamate 60.

The protein belongs to the conotoxin T superfamily. Post-translationally, contains 2 disulfide bonds that can be either 'C1-C3, C2-C4' or 'C1-C4, C2-C3', since these disulfide connectivities have been observed for conotoxins with cysteine framework V (for examples, see AC P0DQQ7 and AC P81755). In terms of tissue distribution, expressed by the venom duct.

The protein localises to the secreted. This chain is Conotoxin mr5.1b, found in Conus marmoreus (Marble cone).